The primary structure comprises 98 residues: Prolactin-releasing peptide (98 aa).

The N-terminal stretch at 1 to 22 (MKAVGAWLLCLLLLGLALQGAA) is a signal peptide. 2 disordered regions span residues 52 to 71 (RFGRRRAAPGDGPRPGPRRV) and 79 to 98 (GGAEPSRALPGRLTAQLVQE). Phenylalanine 53 is subject to Phenylalanine amide. Positions 58–98 (AAPGDGPRPGPRRVPACFRLEGGAEPSRALPGRLTAQLVQE) are excised as a propeptide.

Amidation of C-terminus is required for receptor interaction. Medulla oblongata and hypothalamus.

The protein resides in the secreted. Its function is as follows. Stimulates prolactin (PRL) release and regulates the expression of prolactin through its receptor GPR10. May stimulate lactotrophs directly to secrete PRL. In Bos taurus (Bovine), this protein is Prolactin-releasing peptide (PRLH).